The following is a 40-amino-acid chain: Photosystem II reaction center protein L (40 aa).

Residues 19-39 form a helical membrane-spanning segment; that stretch reads SLFLGLLLVFVLGILFSSYFF.

This sequence belongs to the PsbL family. As to quaternary structure, PSII is composed of 1 copy each of membrane proteins PsbA, PsbB, PsbC, PsbD, PsbE, PsbF, PsbH, PsbI, PsbJ, PsbK, PsbL, PsbM, PsbT, PsbX, PsbY, PsbZ, Psb30/Ycf12, peripheral proteins PsbO, CyanoQ (PsbQ), PsbU, PsbV and a large number of cofactors. It forms dimeric complexes.

The protein localises to the cellular thylakoid membrane. Functionally, one of the components of the core complex of photosystem II (PSII). PSII is a light-driven water:plastoquinone oxidoreductase that uses light energy to abstract electrons from H(2)O, generating O(2) and a proton gradient subsequently used for ATP formation. It consists of a core antenna complex that captures photons, and an electron transfer chain that converts photonic excitation into a charge separation. This subunit is found at the monomer-monomer interface and is required for correct PSII assembly and/or dimerization. The protein is Photosystem II reaction center protein L of Synechococcus elongatus (strain ATCC 33912 / PCC 7942 / FACHB-805) (Anacystis nidulans R2).